Here is a 296-residue protein sequence, read N- to C-terminus: ATP synthase gamma chain (296 aa).

It belongs to the ATPase gamma chain family. As to quaternary structure, F-type ATPases have 2 components, CF(1) - the catalytic core - and CF(0) - the membrane proton channel. CF(1) has five subunits: alpha(3), beta(3), gamma(1), delta(1), epsilon(1). CF(0) has three main subunits: a, b and c.

Its subcellular location is the cell inner membrane. In terms of biological role, produces ATP from ADP in the presence of a proton gradient across the membrane. The gamma chain is believed to be important in regulating ATPase activity and the flow of protons through the CF(0) complex. The sequence is that of ATP synthase gamma chain from Methylorubrum extorquens (strain PA1) (Methylobacterium extorquens).